Reading from the N-terminus, the 297-residue chain is Bifunctional protein FolD 2 (297 aa).

Residues 173 to 175 (GKS), serine 198, and isoleucine 239 contribute to the NADP(+) site.

The protein belongs to the tetrahydrofolate dehydrogenase/cyclohydrolase family. In terms of assembly, homodimer.

The enzyme catalyses (6R)-5,10-methylene-5,6,7,8-tetrahydrofolate + NADP(+) = (6R)-5,10-methenyltetrahydrofolate + NADPH. The catalysed reaction is (6R)-5,10-methenyltetrahydrofolate + H2O = (6R)-10-formyltetrahydrofolate + H(+). The protein operates within one-carbon metabolism; tetrahydrofolate interconversion. In terms of biological role, catalyzes the oxidation of 5,10-methylenetetrahydrofolate to 5,10-methenyltetrahydrofolate and then the hydrolysis of 5,10-methenyltetrahydrofolate to 10-formyltetrahydrofolate. This Sinorhizobium medicae (strain WSM419) (Ensifer medicae) protein is Bifunctional protein FolD 2.